Here is a 207-residue protein sequence, read N- to C-terminus: Interleukin-6 (207 aa).

The N-terminal stretch at 1 to 18 (MKFFSIASLGLLLVVATA) is a signal peptide. The interval 26–47 (REDGENSVTRNKPTRASSGKTR) is disordered. Positions 31-44 (NSVTRNKPTRASSG) are enriched in polar residues. An intrachain disulfide couples Cys65 to Cys71. Phosphoserine is present on Ser74. A disulfide bond links Cys94 and Cys104.

The protein belongs to the IL-6 superfamily. In terms of assembly, component of a hexamer of two molecules each of IL6, IL6R and IL6ST; first binds to IL6R to associate with the signaling subunit IL6ST. Interacts with IL6R (via the N-terminal ectodomain); this interaction may be affected by IL6R-binding with SORL1, hence decreasing IL6 cis signaling. Interacts with SORL1 (via the N-terminal ectodomain); this interaction leads to IL6 internalization and lysosomal degradation. May form a trimeric complex with the soluble SORL1 ectodomain and soluble IL6R receptor; this interaction might stabilize circulating IL6, hence promoting IL6 trans signaling.

Its subcellular location is the secreted. Its function is as follows. Cytokine with a wide variety of biological functions in immunity, tissue regeneration, and metabolism. Binds to IL6R, then the complex associates to the signaling subunit IL6ST/gp130 to trigger the intracellular IL6-signaling pathway. The interaction with the membrane-bound IL6R and IL6ST stimulates 'classic signaling', whereas the binding of IL6 and soluble IL6R to IL6ST stimulates 'trans-signaling'. Alternatively, 'cluster signaling' occurs when membrane-bound IL6:IL6R complexes on transmitter cells activate IL6ST receptors on neighboring receiver cells. In terms of biological role, IL6 is a potent inducer of the acute phase response. Rapid production of IL6 contributes to host defense during infection and tissue injury, but excessive IL6 synthesis is involved in disease pathology. In the innate immune response, is synthesized by myeloid cells, such as macrophages and dendritic cells, upon recognition of pathogens through toll-like receptors (TLRs) at the site of infection or tissue injury. In the adaptive immune response, is required for the differentiation of B cells into immunoglobulin-secreting cells. Plays a major role in the differentiation of CD4(+) T cell subsets. Essential factor for the development of T follicular helper (Tfh) cells that are required for the induction of germinal-center formation. Required to drive naive CD4(+) T cells to the Th17 lineage. Also required for proliferation of myeloma cells and the survival of plasmablast cells. Functionally, acts as an essential factor in bone homeostasis and on vessels directly or indirectly by induction of VEGF, resulting in increased angiogenesis activity and vascular permeability. Induces, through 'trans-signaling' and synergistically with IL1B and TNF, the production of VEGF. Involved in metabolic controls, is discharged into the bloodstream after muscle contraction increasing lipolysis and improving insulin resistance. 'Trans-signaling' in central nervous system also regulates energy and glucose homeostasis. Mediates, through GLP-1, crosstalk between insulin-sensitive tissues, intestinal L cells and pancreatic islets to adapt to changes in insulin demand. Also acts as a myokine. Plays a protective role during liver injury, being required for maintenance of tissue regeneration. Also has a pivotal role in iron metabolism by regulating HAMP/hepcidin expression upon inflammation or bacterial infection. Through activation of IL6ST-YAP-NOTCH pathway, induces inflammation-induced epithelial regeneration. This is Interleukin-6 (IL6) from Marmota monax (Woodchuck).